The chain runs to 188 residues: UPF0398 protein OEOE_1093 (188 aa).

The protein belongs to the UPF0398 family.

This is UPF0398 protein OEOE_1093 from Oenococcus oeni (strain ATCC BAA-331 / PSU-1).